The following is a 393-amino-acid chain: Protein TsgA (393 aa).

Transmembrane regions (helical) follow at residues 11–31 (WISF…GMVM), 51–71 (FLNA…EIVP), 78–98 (FGFL…SLAL), 101–121 (TAMF…TFLI), 134–154 (LLFT…IAAF), 162–182 (WYWV…LTFG), 206–226 (IGVL…LGFI), 245–265 (TLVS…SFIL), 273–293 (ILTV…TGTP), 297–317 (AWSI…IITL), 332–352 (FVLT…GPIV), and 361–381 (LLTA…LGFV).

The protein belongs to the major facilitator superfamily. TsgA family.

Its subcellular location is the cell inner membrane. The protein is Protein TsgA of Shigella boydii serotype 4 (strain Sb227).